The chain runs to 309 residues: MRGYKIFSGSANVEFARQVSKYLSLPLSDAGVKRFSDGEISVQIDESVRGKDVFIIQSTCAPTNDNLMELLILTDALRRSSANSITAIIPYFGYARQDRKANPRVPITAKLVANLIQAAGIDRVATIDLHAGQIQGFFDIPVDNLYGSIVFNDYIKAKHFKNAIIGSPDIGGVARARSVAKHLGLDIVIVDKRREKANESEVMNIIGDVKDKEVILVDDIIDTAGTIVKAAEALKEKGAKSVMACCTHAVLSGKAYERIASGVLDELVVTDTIPLKEQLPNIKVLSVTPVFAEVIRRVYHNESVNSLFI.

Residues 37–39 (DGE) and 96–97 (RQ) contribute to the ATP site. 2 residues coordinate Mg(2+): H130 and D169. The active site involves K192. D-ribose 5-phosphate is bound by residues R194, D218, and 222–226 (DTAGT).

The protein belongs to the ribose-phosphate pyrophosphokinase family. Class I subfamily. In terms of assembly, homohexamer. Requires Mg(2+) as cofactor.

It localises to the cytoplasm. It catalyses the reaction D-ribose 5-phosphate + ATP = 5-phospho-alpha-D-ribose 1-diphosphate + AMP + H(+). It participates in metabolic intermediate biosynthesis; 5-phospho-alpha-D-ribose 1-diphosphate biosynthesis; 5-phospho-alpha-D-ribose 1-diphosphate from D-ribose 5-phosphate (route I): step 1/1. Functionally, involved in the biosynthesis of the central metabolite phospho-alpha-D-ribosyl-1-pyrophosphate (PRPP) via the transfer of pyrophosphoryl group from ATP to 1-hydroxyl of ribose-5-phosphate (Rib-5-P). This is Ribose-phosphate pyrophosphokinase from Campylobacter jejuni subsp. jejuni serotype O:2 (strain ATCC 700819 / NCTC 11168).